Reading from the N-terminus, the 358-residue chain is PqqA peptide cyclase (358 aa).

Residues 4–219 form the Radical SAM core domain; the sequence is PSPPMSLLAE…VEAERAKGGL (216 aa). Positions 18, 22, and 25 each coordinate [4Fe-4S] cluster.

It belongs to the radical SAM superfamily. PqqE family. As to quaternary structure, interacts with PqqD. The interaction is necessary for activity of PqqE. Requires [4Fe-4S] cluster as cofactor.

It carries out the reaction [PQQ precursor protein] + S-adenosyl-L-methionine = E-Y cross-linked-[PQQ precursor protein] + 5'-deoxyadenosine + L-methionine + H(+). It functions in the pathway cofactor biosynthesis; pyrroloquinoline quinone biosynthesis. Functionally, catalyzes the cross-linking of a glutamate residue and a tyrosine residue in the PqqA protein as part of the biosynthesis of pyrroloquinoline quinone (PQQ). This is PqqA peptide cyclase from Gluconobacter oxydans (strain 621H) (Gluconobacter suboxydans).